Consider the following 526-residue polypeptide: ATP synthase subunit alpha (526 aa).

An ATP-binding site is contributed by 171–178; the sequence is GDRQVGKT.

Belongs to the ATPase alpha/beta chains family. As to quaternary structure, F-type ATPases have 2 components, CF(1) - the catalytic core - and CF(0) - the membrane proton channel. CF(1) has five subunits: alpha(3), beta(3), gamma(1), delta(1), epsilon(1). CF(0) has three main subunits: a(1), b(2) and c(9-12). The alpha and beta chains form an alternating ring which encloses part of the gamma chain. CF(1) is attached to CF(0) by a central stalk formed by the gamma and epsilon chains, while a peripheral stalk is formed by the delta and b chains.

It is found in the cell inner membrane. The enzyme catalyses ATP + H2O + 4 H(+)(in) = ADP + phosphate + 5 H(+)(out). Its function is as follows. Produces ATP from ADP in the presence of a proton gradient across the membrane. The alpha chain is a regulatory subunit. The protein is ATP synthase subunit alpha of Azobacteroides pseudotrichonymphae genomovar. CFP2.